The sequence spans 264 residues: Ferric siderophore reductase (264 aa).

Residues 9-127 (SPTRLTYISD…PGPLKMNRFD (119 aa)) enclose the FAD-binding FR-type domain. 12 residues coordinate FAD: R73, S74, T76, D90, V92, H96, A100, T101, K247, N249, T250, and A252.

This sequence belongs to the SIP oxidoreductase family. The cofactor is FAD.

Its function is as follows. Ferric-siderophore reductase involved in iron removal from the siderophores after their transport into the cell. Catalyzes the reduction of the ferric iron bound to the hydroxamate siderophores produced by Shewanella to ferrous iron. Can use a ferredoxin as electron donor. Despite the clear evidence for the interaction with NAD(P)H, no direct reduction of the enzyme by these compounds is observed, nor consumption of NAD(P)H, suggesting that NADH and NADPH are not the physiological electron donors. This is Ferric siderophore reductase from Shewanella frigidimarina (strain NCIMB 400).